The following is a 533-amino-acid chain: E3 ubiquitin-protein ligase MGRN1 (533 aa).

Residue G2 is the site of N-myristoyl glycine attachment. The RING-type zinc finger occupies 278–317 (ECVVCLSDLRDTLILPCRHLCLCTSCADTLRYQANNCPIC). Positions 385 to 388 (PSAP) match the Required for TSG101-binding motif. Y390 is subject to Phosphotyrosine. The tract at residues 421–519 (QKGKTQSKSP…QPVPPADIYL (99 aa)) is disordered. Positions 423–439 (GKTQSKSPDSTLRSPSS) are enriched in polar residues. 3 positions are modified to phosphoserine: S429, S450, and S502. A compositionally biased stretch (acidic residues) spans 443–454 (EEDEEKLSEDPE).

As to quaternary structure, interacts with MC1R and MC4R. Interacts with TSG101. Interacts with mislocalized cytosolically exposed PRNP; this interaction alters MGRN1 subcellular location and causes lysosomal enlargement. Autoubiquitinated in vitro.

It is found in the cytoplasm. It localises to the cytosol. The protein localises to the cell membrane. Its subcellular location is the early endosome. It carries out the reaction S-ubiquitinyl-[E2 ubiquitin-conjugating enzyme]-L-cysteine + [acceptor protein]-L-lysine = [E2 ubiquitin-conjugating enzyme]-L-cysteine + N(6)-ubiquitinyl-[acceptor protein]-L-lysine.. The protein operates within protein modification; protein ubiquitination. In terms of biological role, E3 ubiquitin-protein ligase. Mediates TSG101 monoubiquitination at multiple sites. Plays a role in the regulation of endosome-to-lysosome trafficking. Impairs MC1R- and MC4R-signaling by competing with GNAS-binding to MCRs and inhibiting agonist-induced cAMP production. Does not inhibit ADRB2-signaling. Does not promote MC1R ubiquitination. Also acts as a negative regulator of hedgehog signaling. This chain is E3 ubiquitin-protein ligase MGRN1 (Mgrn1), found in Rattus norvegicus (Rat).